The sequence spans 637 residues: 1-deoxy-D-xylulose-5-phosphate synthase (637 aa).

Thiamine diphosphate-binding positions include H76 and 117 to 119; that span reads AHS. Mg(2+) is bound at residue D148. Thiamine diphosphate is bound by residues 149–150, N177, Y287, and E369; that span reads GA. Residue N177 coordinates Mg(2+).

This sequence belongs to the transketolase family. DXPS subfamily. As to quaternary structure, homodimer. The cofactor is Mg(2+). Thiamine diphosphate is required as a cofactor.

The enzyme catalyses D-glyceraldehyde 3-phosphate + pyruvate + H(+) = 1-deoxy-D-xylulose 5-phosphate + CO2. It functions in the pathway metabolic intermediate biosynthesis; 1-deoxy-D-xylulose 5-phosphate biosynthesis; 1-deoxy-D-xylulose 5-phosphate from D-glyceraldehyde 3-phosphate and pyruvate: step 1/1. Catalyzes the acyloin condensation reaction between C atoms 2 and 3 of pyruvate and glyceraldehyde 3-phosphate to yield 1-deoxy-D-xylulose-5-phosphate (DXP). The chain is 1-deoxy-D-xylulose-5-phosphate synthase from Pelagibacter ubique (strain HTCC1062).